Reading from the N-terminus, the 168-residue chain is DOMON domain-containing protein Y73F4A.2 (168 aa).

An N-terminal signal peptide occupies residues 1 to 18 (MFRSIAVLSALLFAFASA). The DOMON domain occupies 26–143 (SDFEVYWRFA…CQKWRFVKSG (118 aa)). Asn36 carries an N-linked (GlcNAc...) asparagine glycan. The interval 148-168 (GQLTRNDKSPKEKKVCPMECN) is disordered. A compositionally biased stretch (basic and acidic residues) spans 152 to 168 (RNDKSPKEKKVCPMECN).

The protein resides in the secreted. This is DOMON domain-containing protein Y73F4A.2 from Caenorhabditis elegans.